Consider the following 527-residue polypeptide: MASDFLPVRRALLSVSDKTGLIDLARALVARNVELLSTGGTAKAIREAGLPVKDVAELTGFPEMMDGRVKTLHPLVHGGLLGRAGIDEAVMAEHGIAPIDLLVLNLYPFESVTVKTDCTLADAVENIDIGGPAMLRSAAKNFARVAVATDPAQYADLLAELEANNGQLSAAKRFALSVAAFNRVAQYDAAISNYLSAVADSAETVPTRNPFPAQINSNFVKVMDLRYGENPHQSGAFYRDLYPVPGTLATFQQLQGKELSYNNLADADAAWECVRQFDAPACVIVKHANPCGVAVGAGCGDAYELAYATDPTSAFGGILAFNKTLDAATAKAILDRQFVEVLIAPDYDAGALEYATKKANVRVLKIPHGNGLNNYDTKRIGSGLLMQSADNRGMSLGELSVVTQRAPSEAELGDLLFAWRVAKYVKSNAIVYAKDSRTIGVGAGQMSRVVSAKIAALKAEEAKLTVAGSVMASDAFFPFRDGIDAAASAGIQAVIQPGGSMRDGEVIAAADEHGIAMVFTGVRHFRH.

Residues 1–149 enclose the MGS-like domain; the sequence is MASDFLPVRR…KNFARVAVAT (149 aa).

This sequence belongs to the PurH family.

The catalysed reaction is (6R)-10-formyltetrahydrofolate + 5-amino-1-(5-phospho-beta-D-ribosyl)imidazole-4-carboxamide = 5-formamido-1-(5-phospho-D-ribosyl)imidazole-4-carboxamide + (6S)-5,6,7,8-tetrahydrofolate. The enzyme catalyses IMP + H2O = 5-formamido-1-(5-phospho-D-ribosyl)imidazole-4-carboxamide. It functions in the pathway purine metabolism; IMP biosynthesis via de novo pathway; 5-formamido-1-(5-phospho-D-ribosyl)imidazole-4-carboxamide from 5-amino-1-(5-phospho-D-ribosyl)imidazole-4-carboxamide (10-formyl THF route): step 1/1. It participates in purine metabolism; IMP biosynthesis via de novo pathway; IMP from 5-formamido-1-(5-phospho-D-ribosyl)imidazole-4-carboxamide: step 1/1. This chain is Bifunctional purine biosynthesis protein PurH, found in Xanthomonas oryzae pv. oryzae (strain PXO99A).